The chain runs to 195 residues: dTTP/UTP pyrophosphatase (195 aa).

Asp76 serves as the catalytic Proton acceptor.

Belongs to the Maf family. YhdE subfamily. The cofactor is a divalent metal cation.

It is found in the cytoplasm. The enzyme catalyses dTTP + H2O = dTMP + diphosphate + H(+). It catalyses the reaction UTP + H2O = UMP + diphosphate + H(+). Functionally, nucleoside triphosphate pyrophosphatase that hydrolyzes dTTP and UTP. May have a dual role in cell division arrest and in preventing the incorporation of modified nucleotides into cellular nucleic acids. The chain is dTTP/UTP pyrophosphatase from Shewanella frigidimarina (strain NCIMB 400).